A 344-amino-acid chain; its full sequence is Ketol-acid reductoisomerase (NADP(+)) (344 aa).

Positions 2 to 181 constitute a KARI N-terminal Rossmann domain; that stretch reads EKIYYDADIS…GAGRAGILTT (180 aa). Residues 25 to 28, R48, S52, and 82 to 85 each bind NADP(+); these read YGSQ and DERQ. H107 is a catalytic residue. G133 is a binding site for NADP(+). The KARI C-terminal knotted domain occupies 182-327; it reads TFREETETDL…RKLRSMMPFI (146 aa). 4 residues coordinate Mg(2+): D190, E194, E226, and E230. S251 contacts substrate.

This sequence belongs to the ketol-acid reductoisomerase family. The cofactor is Mg(2+).

It catalyses the reaction (2R)-2,3-dihydroxy-3-methylbutanoate + NADP(+) = (2S)-2-acetolactate + NADPH + H(+). It carries out the reaction (2R,3R)-2,3-dihydroxy-3-methylpentanoate + NADP(+) = (S)-2-ethyl-2-hydroxy-3-oxobutanoate + NADPH + H(+). It participates in amino-acid biosynthesis; L-isoleucine biosynthesis; L-isoleucine from 2-oxobutanoate: step 2/4. It functions in the pathway amino-acid biosynthesis; L-valine biosynthesis; L-valine from pyruvate: step 2/4. In terms of biological role, involved in the biosynthesis of branched-chain amino acids (BCAA). Catalyzes an alkyl-migration followed by a ketol-acid reduction of (S)-2-acetolactate (S2AL) to yield (R)-2,3-dihydroxy-isovalerate. In the isomerase reaction, S2AL is rearranged via a Mg-dependent methyl migration to produce 3-hydroxy-3-methyl-2-ketobutyrate (HMKB). In the reductase reaction, this 2-ketoacid undergoes a metal-dependent reduction by NADPH to yield (R)-2,3-dihydroxy-isovalerate. The protein is Ketol-acid reductoisomerase (NADP(+)) of Alicyclobacillus acidocaldarius subsp. acidocaldarius (strain ATCC 27009 / DSM 446 / BCRC 14685 / JCM 5260 / KCTC 1825 / NBRC 15652 / NCIMB 11725 / NRRL B-14509 / 104-IA) (Bacillus acidocaldarius).